We begin with the raw amino-acid sequence, 307 residues long: 4-hydroxy-3-methylbut-2-enyl diphosphate reductase (307 aa).

Cys13 lines the [4Fe-4S] cluster pocket. Positions 42 and 75 each coordinate (2E)-4-hydroxy-3-methylbut-2-enyl diphosphate. Dimethylallyl diphosphate is bound by residues His42 and His75. Residues His42 and His75 each contribute to the isopentenyl diphosphate site. Cys97 contributes to the [4Fe-4S] cluster binding site. His125 lines the (2E)-4-hydroxy-3-methylbut-2-enyl diphosphate pocket. His125 is a dimethylallyl diphosphate binding site. Residue His125 participates in isopentenyl diphosphate binding. The Proton donor role is filled by Glu127. Residue Thr165 participates in (2E)-4-hydroxy-3-methylbut-2-enyl diphosphate binding. Position 195 (Cys195) interacts with [4Fe-4S] cluster. The (2E)-4-hydroxy-3-methylbut-2-enyl diphosphate site is built by Ser223, Ser224, Asn225, and Ser267. 4 residues coordinate dimethylallyl diphosphate: Ser223, Ser224, Asn225, and Ser267. Residues Ser223, Ser224, Asn225, and Ser267 each coordinate isopentenyl diphosphate.

The protein belongs to the IspH family. [4Fe-4S] cluster serves as cofactor.

The catalysed reaction is isopentenyl diphosphate + 2 oxidized [2Fe-2S]-[ferredoxin] + H2O = (2E)-4-hydroxy-3-methylbut-2-enyl diphosphate + 2 reduced [2Fe-2S]-[ferredoxin] + 2 H(+). The enzyme catalyses dimethylallyl diphosphate + 2 oxidized [2Fe-2S]-[ferredoxin] + H2O = (2E)-4-hydroxy-3-methylbut-2-enyl diphosphate + 2 reduced [2Fe-2S]-[ferredoxin] + 2 H(+). The protein operates within isoprenoid biosynthesis; dimethylallyl diphosphate biosynthesis; dimethylallyl diphosphate from (2E)-4-hydroxy-3-methylbutenyl diphosphate: step 1/1. It participates in isoprenoid biosynthesis; isopentenyl diphosphate biosynthesis via DXP pathway; isopentenyl diphosphate from 1-deoxy-D-xylulose 5-phosphate: step 6/6. Its function is as follows. Catalyzes the conversion of 1-hydroxy-2-methyl-2-(E)-butenyl 4-diphosphate (HMBPP) into a mixture of isopentenyl diphosphate (IPP) and dimethylallyl diphosphate (DMAPP). Acts in the terminal step of the DOXP/MEP pathway for isoprenoid precursor biosynthesis. This Chlamydia trachomatis serovar L2 (strain ATCC VR-902B / DSM 19102 / 434/Bu) protein is 4-hydroxy-3-methylbut-2-enyl diphosphate reductase.